Reading from the N-terminus, the 201-residue chain is Recombination protein RecR (201 aa).

The segment at 57–72 (CKLCQIYTEQPLCNIC) adopts a C4-type zinc-finger fold. The 96-residue stretch at 80–175 (TLLCVVESPA…KCSRIAHGVP (96 aa)) folds into the Toprim domain.

Belongs to the RecR family.

May play a role in DNA repair. It seems to be involved in an RecBC-independent recombinational process of DNA repair. It may act with RecF and RecO. This chain is Recombination protein RecR, found in Coxiella burnetii (strain RSA 493 / Nine Mile phase I).